Here is a 245-residue protein sequence, read N- to C-terminus: Transcription factor FUP7 (245 aa).

The segment at residues Cys-10–Cys-37 is a DNA-binding region (zn(2)-C6 fungal-type). The interval Glu-162–Gln-216 is disordered. Positions Gln-199–Asn-214 are enriched in polar residues.

Its subcellular location is the nucleus. In terms of biological role, transcription factor; part of the gene cluster that mediates the biosynthesis of the mycotoxin fusaproliferin (FUP) that belongs to the class of bicyclic sesterterpenoids. The polypeptide is Transcription factor FUP7 (Fusarium proliferatum (strain ET1) (Orchid endophyte fungus)).